The sequence spans 95 residues: Cell division topological specificity factor (95 aa).

The protein belongs to the MinE family.

In terms of biological role, prevents the cell division inhibition by proteins MinC and MinD at internal division sites while permitting inhibition at polar sites. This ensures cell division at the proper site by restricting the formation of a division septum at the midpoint of the long axis of the cell. The polypeptide is Cell division topological specificity factor (Methylorubrum extorquens (strain CM4 / NCIMB 13688) (Methylobacterium extorquens)).